A 210-amino-acid chain; its full sequence is Urease accessory protein UreF (210 aa).

The protein belongs to the UreF family. In terms of assembly, ureD, UreF and UreG form a complex that acts as a GTP-hydrolysis-dependent molecular chaperone, activating the urease apoprotein by helping to assemble the nickel containing metallocenter of UreC. The UreE protein probably delivers the nickel.

It is found in the cytoplasm. Functionally, required for maturation of urease via the functional incorporation of the urease nickel metallocenter. The protein is Urease accessory protein UreF of Cereibacter sphaeroides (strain ATCC 17023 / DSM 158 / JCM 6121 / CCUG 31486 / LMG 2827 / NBRC 12203 / NCIMB 8253 / ATH 2.4.1.) (Rhodobacter sphaeroides).